A 273-amino-acid polypeptide reads, in one-letter code: MKNLFFSAYKKVFSYITSIVIFMVSLPYAYSQDVVVNTTKHLFTVKIGTTRVIYPSSSTKGVSVSVANPQDYPILVQTQVKDEDKTSPAPFIVTPPLFRLDAGLQGRVRIIRTGGKFPEDRETLQWLCLTGIPPKNGDAWGNTQNNPKNSSPTMDIQMSISTCIKLLFRPDKVKGDPTDSADSLTWRYKGNYLEVNNPTPFYMNFYSLRIGDEKINLSDLGSKDEIKNGSYVPPFSSRDFIIPVKNKGKATEVFWQVINDNGGVSREFKSTVQ.

Positions 1–31 (MKNLFFSAYKKVFSYITSIVIFMVSLPYAYS) are cleaved as a signal peptide. A disulfide bridge connects residues Cys128 and Cys163.

Belongs to the periplasmic pilus chaperone family.

It localises to the periplasm. Its function is as follows. Required for the biogenesis of the pH 6 antigen. This is Chaperone protein PsaB (psaB) from Yersinia pestis.